We begin with the raw amino-acid sequence, 268 residues long: 4-hydroxy-tetrahydrodipicolinate reductase (268 aa).

NAD(+) is bound by residues 10–15 and aspartate 36; that span reads GASGRM. NADP(+) is bound at residue arginine 37. Residues 99-101 and 123-126 contribute to the NAD(+) site; these read GTT and SANM. The Proton donor/acceptor role is filled by histidine 156. Histidine 157 contacts (S)-2,3,4,5-tetrahydrodipicolinate. Residue lysine 160 is the Proton donor of the active site. 166–167 contacts (S)-2,3,4,5-tetrahydrodipicolinate; that stretch reads GT.

This sequence belongs to the DapB family.

The protein resides in the cytoplasm. The enzyme catalyses (S)-2,3,4,5-tetrahydrodipicolinate + NAD(+) + H2O = (2S,4S)-4-hydroxy-2,3,4,5-tetrahydrodipicolinate + NADH + H(+). It carries out the reaction (S)-2,3,4,5-tetrahydrodipicolinate + NADP(+) + H2O = (2S,4S)-4-hydroxy-2,3,4,5-tetrahydrodipicolinate + NADPH + H(+). It participates in amino-acid biosynthesis; L-lysine biosynthesis via DAP pathway; (S)-tetrahydrodipicolinate from L-aspartate: step 4/4. Catalyzes the conversion of 4-hydroxy-tetrahydrodipicolinate (HTPA) to tetrahydrodipicolinate. This Burkholderia thailandensis (strain ATCC 700388 / DSM 13276 / CCUG 48851 / CIP 106301 / E264) protein is 4-hydroxy-tetrahydrodipicolinate reductase.